The following is a 569-amino-acid chain: MSRKQLALFEPVLLVQALTDAVKKLSPRAQWRNPVMFVVWAGSVLATLLTLAMVTGQIAGSALFTGVISLWLWFTVLFANFAEALAEGRSKAQANSLKGVKKTAFARRLRAPRHDAQADNVPAAELRKGDIVLVKAGDIIPCDGEVIEGGASVDESAITGESAPVIRESGGDFASVTGGRAVEAAGDVDVLLLDKTGTITLGNRQASDFIPARGVDERTLADAAQLASLADETPEGRSIVILAKQRFNLRERDVQSLHATFVPFTAQSRMSGINIDNRMIRKGSVDAIRRHVESNGGHFPADVEQNVENVARLGATPLVVVEGARVLGVIALKDIVKGGIKERFAQLRKMGIKTVMITGDNRLTAAAIAAEAGVDDFLAEATPEAKLALIRQYQAEGRLVAMTGDGTNDAPALAQADVAVAMNSGTQAAKEAGNMVDLDSNPTKLIEVVHIGKQMLMTRGSLTTFSIANDVAKYFAIIPAAFAATYPQLNALNVMGLHSPNSAILSAVIFNALIIIFLIPLALKGVSYKPLSASAMLRRNLWIYGLGGLVVPFIGIKVIDVLLTLLDLA.

A run of 2 helical transmembrane segments spans residues 34-54 (PVMFVVWAGSVLATLLTLAMV) and 58-78 (IAGSALFTGVISLWLWFTVLF). Asp-194 (4-aspartylphosphate intermediate) is an active-site residue. Residues Asp-231, Glu-235, 264–271 (FTAQSRMS), and Lys-282 contribute to the ATP site. Mg(2+)-binding residues include Asp-405 and Asp-409. 3 consecutive transmembrane segments (helical) span residues 475–495 (FAIIPAAFAATYPQLNALNVM), 503–523 (AILSAVIFNALIIIFLIPLAL), and 543–563 (IYGLGGLVVPFIGIKVIDVLL).

The protein belongs to the cation transport ATPase (P-type) (TC 3.A.3) family. Type IA subfamily. As to quaternary structure, the system is composed of three essential subunits: KdpA, KdpB and KdpC.

The protein resides in the cell inner membrane. It carries out the reaction K(+)(out) + ATP + H2O = K(+)(in) + ADP + phosphate + H(+). Part of the high-affinity ATP-driven potassium transport (or Kdp) system, which catalyzes the hydrolysis of ATP coupled with the electrogenic transport of potassium into the cytoplasm. This subunit is responsible for energy coupling to the transport system and for the release of the potassium ions to the cytoplasm. This chain is Putative potassium-transporting ATPase ATP-binding subunit, found in Salmonella typhi.